The sequence spans 460 residues: MANDPLEGFHEVNLASPTSPDLLGVCDPGTQEQTTSPSVIYRPHPSTLCSATIQANALNLSDLPTQPVYSSPRHLNCAEISNISIHVPEPASSVASEVAAGLTRFTSRKDSCNAEREFLQGATVTEASAGNDDIFGLSTDSLSRLRSPSVLEVREKGYERLKEELAKAQRELKLKDEECERLSKVRDQLGQELEELTASLFEEAHKMVREANVKQATAEKQLKEAQGKIDVLQAEVAALKTLVLSSSPTSPTQEPLAAGKTPFKRGHTRNKSTSSAMSGSHQDFSAIQPIVKDCREADLSLYNEFRSWKDEPTMDRTCPFLDKIYQEDIFPCLTFAKSELASAVLEAVENNTLSIEPVGLQPIRFVKASAVECGGPKKCALTGQSKPCKHRIKLGDSSSYYYISPVCRYRITSVCNFFTYIRYIQQGLVKQQDVDQMFWEVMQLRKEMSLAKLGYFKEEL.

6 positions are modified to phosphoserine: Ser-147, Ser-149, Ser-247, Ser-250, Ser-272, and Ser-280. Residues 149–244 (SVLEVREKGY…EVAALKTLVL (96 aa)) are a coiled coil. The tract at residues 246-280 (SSPTSPTQEPLAAGKTPFKRGHTRNKSTSSAMSGS) is disordered. Polar residues predominate over residues 271–280 (KSTSSAMSGS).

It belongs to the SEC2 family. As to quaternary structure, homodimer. Interacts with the N-terminal region of SSX2. Interacts with the GDP-bound forms of RAB8A and RAB8B. The interaction with RAB8A is prevented by phosphorylation of RAB8A at 'Thr-72'. Interacts with the GDP-bound forms of RAB3A and RAB3D. Interacts with DCDC1. Interacts (via the N-terminal region) with TRAPPC14; this interaction mediates RAB3IP association with the TRAPP II complex. Forms a heterotetramer with RAB11A where RAB3IP homodimer binds two RAB11A subunits. Forms a complex with RAB11A and RAB11FIP3, probably a heterohexamer with two of each protein subunit, where Rabin8/RAB3IP and RAB11FIP3 simultaneously bind to RAB11A; the complex promotes preciliary trafficking. Forms a complex containing RAB11A, ASAP1, RAB3IP, RAP11FIP3 and ARF4; the complex promotes preciliary trafficking; the complex binds to RHO in photoreceptor cells and promotes RHO ciliary transport. Ubiquitously expressed. Expressed at highest level in testis.

The protein localises to the cytoplasm. Its subcellular location is the nucleus. The protein resides in the cytoskeleton. It localises to the cell projection. It is found in the lamellipodium. Guanine nucleotide exchange factor (GEF) which may activate RAB8A and RAB8B. Promotes the exchange of GDP to GTP, converting inactive GDP-bound Rab proteins into their active GTP-bound form. Mediates the release of GDP from RAB8A and RAB8B but not from RAB3A or RAB5. Modulates actin organization and promotes polarized transport of RAB8A-specific vesicles to the cell surface. Together with RAB11A, RAB8A, the exocyst complex, PARD3, PRKCI, ANXA2, CDC42 and DNMBP promotes transcytosis of PODXL to the apical membrane initiation sites (AMIS), apical surface formation and lumenogenesis. Together with RAB11A and FIP3/RAB11FIP3, parts of the ciliary targeting complex that promotes preciliary vesicle trafficking to mother centriole and ciliogenesis initiation. Part of the ciliary targeting complex containing Rab11, ASAP1, RAB3IP and RAB11FIP3 and ARF4 that promotes RAB3IP preciliary vesicle trafficking to mother centriole and ciliogenesis initiation. In Rattus norvegicus (Rat), this protein is Rab-3A-interacting protein (Rab3ip).